We begin with the raw amino-acid sequence, 196 residues long: Large ribosomal subunit protein uL10 (196 aa).

Positions 169–196 are disordered; it reads KAAECPAEAPQPAAETPAEAPEAPADAE. The segment covering 172-196 has biased composition (low complexity); sequence ECPAEAPQPAAETPAEAPEAPADAE.

This sequence belongs to the universal ribosomal protein uL10 family. Part of the ribosomal stalk of the 50S ribosomal subunit. The N-terminus interacts with L11 and the large rRNA to form the base of the stalk. The C-terminus forms an elongated spine to which L12 dimers bind in a sequential fashion forming a multimeric L10(L12)X complex.

Its function is as follows. Forms part of the ribosomal stalk, playing a central role in the interaction of the ribosome with GTP-bound translation factors. The chain is Large ribosomal subunit protein uL10 from Mycobacterium avium (strain 104).